Here is a 382-residue protein sequence, read N- to C-terminus: Dual-specificity RNA methyltransferase RlmN (382 aa).

The active-site Proton acceptor is the Glu96. One can recognise a Radical SAM core domain in the interval 102–342; it reads QGKRGTLCVS…VRTTRGEDID (241 aa). Cysteines 109 and 345 form a disulfide. [4Fe-4S] cluster contacts are provided by Cys116, Cys120, and Cys123. S-adenosyl-L-methionine is bound by residues 170–171, Ser202, 224–226, and Asn302; these read GE and SLH. Catalysis depends on Cys345, which acts as the S-methylcysteine intermediate.

Belongs to the radical SAM superfamily. RlmN family. It depends on [4Fe-4S] cluster as a cofactor.

The protein resides in the cytoplasm. The enzyme catalyses adenosine(2503) in 23S rRNA + 2 reduced [2Fe-2S]-[ferredoxin] + 2 S-adenosyl-L-methionine = 2-methyladenosine(2503) in 23S rRNA + 5'-deoxyadenosine + L-methionine + 2 oxidized [2Fe-2S]-[ferredoxin] + S-adenosyl-L-homocysteine. The catalysed reaction is adenosine(37) in tRNA + 2 reduced [2Fe-2S]-[ferredoxin] + 2 S-adenosyl-L-methionine = 2-methyladenosine(37) in tRNA + 5'-deoxyadenosine + L-methionine + 2 oxidized [2Fe-2S]-[ferredoxin] + S-adenosyl-L-homocysteine. Its function is as follows. Specifically methylates position 2 of adenine 2503 in 23S rRNA and position 2 of adenine 37 in tRNAs. m2A2503 modification seems to play a crucial role in the proofreading step occurring at the peptidyl transferase center and thus would serve to optimize ribosomal fidelity. The sequence is that of Dual-specificity RNA methyltransferase RlmN from Pseudomonas fluorescens (strain SBW25).